The sequence spans 801 residues: Bromodomain-containing protein 2 (801 aa).

N-acetylmethionine is present on methionine 1. Residue threonine 6 is modified to Phosphothreonine. Serine 37 is subject to Phosphoserine. A disordered region spans residues 53–73; it reads ALQLTPANPPPPEVSNPKKPG. The 107-residue stretch at 74–180 folds into the Bromo 1 domain; the sequence is RVTNQLQYLH…KIFLQKVASM (107 aa). A protein contacts are provided by aspartate 112, tyrosine 155, asparagine 156, lysine 157, aspartate 160, and aspartate 161. 3 disordered regions span residues 268–349, 456–647, and 737–801; these read PPAQ…LSEQ, EPLE…YDEK, and EKRL…SDSG. The span at 285–298 shows a compositional bias: low complexity; the sequence is TTTPTPTAILAPGS. Phosphoserine occurs at positions 298, 301, and 305. Basic and acidic residues predominate over residues 316–332; the sequence is MRRESGRPIKPPRKDLP. Residues 344–453 form the Bromo 2 domain; sequence GKLSEQLKHC…DVFEFRYAKM (110 aa). Acidic residues predominate over residues 481–514; the sequence is SSEESSSESSSEEEEEEDEEDEEEEESESSDSEE. A compositionally biased stretch (basic residues) spans 544–566; it reads KPKRKREKKEKKKKRKAEKHRGR. The Nuclear localization signal motif lies at 555–559; the sequence is KKKRK. Over residues 592 to 612 the composition is skewed to gly residues; that stretch reads GSGGGSAALGPSGFGPSGGSG. One can recognise an NET domain in the interval 632–714; that stretch reads DSEEEEESRP…SCLRKKPRKP (83 aa). The residue at position 633 (serine 633) is a Phosphoserine. The span at 763-795 shows a compositional bias: low complexity; sequence SSSAQQVAVSRLSASSSSSDSSSSSSSSSSSDT.

This sequence belongs to the BET family. As to quaternary structure, homodimer. Interacts with E2F1. Interacts with (acetylated) STAT3; promoting STAT3 recruitment to chromatin. Interacts with CTCF; promoting BRD2 recruitment to chromatin. In terms of assembly, (Microbial infection) Interacts with herpes virus 8 protein LANA1.

Its subcellular location is the nucleus. It localises to the chromosome. Its activity is regulated as follows. Inhibited by JQ1, a thieno-triazolo-1,4-diazepine derivative, which specifically inhibits members of the BET family (BRD2, BRD3 and BRD4). The first bromo domain is inhibited by GSK778 (iBET-BD1), which specifically inhibits the first bromo domain of members of the BET family (BRD2, BRD3 and BRD4). The second bromo domain is inhibited by ABBV-744, which specifically inhibits the second bromo domain of members of the BET family (BRD2, BRD3 and BRD4). The second bromo domain is inhibited by GSK046 (iBET-BD2), which specifically inhibits the second bromo domain of members of the BET family (BRD2, BRD3 and BRD4). In terms of biological role, chromatin reader protein that specifically recognizes and binds histone H4 acetylated at 'Lys-5' and 'Lys-12' (H4K5ac and H4K12ac, respectively), thereby controlling gene expression and remodeling chromatin structures. Recruits transcription factors and coactivators to target gene sites, and activates RNA polymerase II machinery for transcriptional elongation. Plays a key role in genome compartmentalization via its association with CTCF and cohesin: recruited to chromatin by CTCF and promotes formation of topologically associating domains (TADs) via its ability to bind acetylated histones, contributing to CTCF boundary formation and enhancer insulation. Also recognizes and binds acetylated non-histone proteins, such as STAT3. Involved in inflammatory response by regulating differentiation of naive CD4(+) T-cells into T-helper Th17: recognizes and binds STAT3 acetylated at 'Lys-87', promoting STAT3 recruitment to chromatin. In addition to acetylated lysines, also recognizes and binds lysine residues on histones that are both methylated and acetylated on the same side chain to form N6-acetyl-N6-methyllysine (Kacme), an epigenetic mark of active chromatin associated with increased transcriptional initiation. Specifically binds histone H4 acetyl-methylated at 'Lys-5' and 'Lys-12' (H4K5acme and H4K12acme, respectively). The protein is Bromodomain-containing protein 2 of Homo sapiens (Human).